The primary structure comprises 1770 residues: Transposon Ty2-DR2 Gag-Pol polyprotein (1770 aa).

2 stretches are compositionally biased toward polar residues: residues 1-39 and 49-60; these read MESQ…SASN and KVNSQEETTPGT. Disordered regions lie at residues 1 to 89 and 360 to 449; these read MESQ…QQHG and HSEY…SNDE. An RNA-binding region spans residues 295-397; that stretch reads ENNINVSDRL…SSKPRAAKAH (103 aa). Residues 369-381 are compositionally biased toward low complexity; sequence TSPNTTNTKVTTR. Composition is skewed to polar residues over residues 399-408 and 415-435; these read IATSSKFSRV and ESTV…GQQQ. The For protease activity; shared with dimeric partner role is filled by D457. Residues 579–636 are integrase-type zinc finger-like; it reads NVNKSKSVNKYPYPLIHRMLGHANFRSIQKSLKKNAVTYLKESDIEWSNASTYQCPDC. An Integrase catalytic domain is found at 656–831; the sequence is ESYEPFQYLH…AGLDITTILP (176 aa). Residues D667 and D732 each contribute to the Mg(2+) site. Disordered regions lie at residues 1005–1038, 1059–1135, and 1171–1222; these read GGTI…MIDL, TEEP…KSSK, and SRQT…LEPP. Composition is skewed to polar residues over residues 1009–1024 and 1065–1082; these read ESDT…FTAR and QRNS…STPS. The Bipartite nuclear localization signal signature appears at 1193-1227; it reads KKRSLEDNETEIEVSRDTWNNKNMRSLEPPRSKKR. The 139-residue stretch at 1353 to 1491 folds into the Reverse transcriptase Ty1/copia-type domain; that stretch reads NDYYITQLDI…DILGLEIKYQ (139 aa). D1361, D1442, D1443, D1625, E1667, and D1700 together coordinate Mg(2+). The 143-residue stretch at 1625–1767 folds into the RNase H Ty1/copia-type domain; that stretch reads DASYGNQPYY…IKTFKLLTNK (143 aa).

As to quaternary structure, the capsid protein forms a homotrimer, from which the VLPs are assembled. The protease is a homodimer, whose active site consists of two apposed aspartic acid residues. In terms of processing, initially, virus-like particles (VLPs) are composed of the structural unprocessed proteins Gag and Gag-Pol, and also contain the host initiator methionine tRNA (tRNA(i)-Met) which serves as a primer for minus-strand DNA synthesis, and a dimer of genomic Ty RNA. Processing of the polyproteins occurs within the particle and proceeds by an ordered pathway, called maturation. First, the protease (PR) is released by autocatalytic cleavage of the Gag-Pol polyprotein, and this cleavage is a prerequisite for subsequent processing at the remaining sites to release the mature structural and catalytic proteins. Maturation takes place prior to the RT reaction and is required to produce transposition-competent VLPs.

Its subcellular location is the cytoplasm. The protein localises to the nucleus. It catalyses the reaction DNA(n) + a 2'-deoxyribonucleoside 5'-triphosphate = DNA(n+1) + diphosphate. The catalysed reaction is Endonucleolytic cleavage to 5'-phosphomonoester.. Functionally, capsid protein (CA) is the structural component of the virus-like particle (VLP), forming the shell that encapsulates the retrotransposons dimeric RNA genome. The particles are assembled from trimer-clustered units and there are holes in the capsid shells that allow for the diffusion of macromolecules. CA also has nucleocapsid-like chaperone activity, promoting primer tRNA(i)-Met annealing to the multipartite primer-binding site (PBS), dimerization of Ty2 RNA and initiation of reverse transcription. In terms of biological role, the aspartyl protease (PR) mediates the proteolytic cleavages of the Gag and Gag-Pol polyproteins after assembly of the VLP. Its function is as follows. Reverse transcriptase/ribonuclease H (RT) is a multifunctional enzyme that catalyzes the conversion of the retro-elements RNA genome into dsDNA within the VLP. The enzyme displays a DNA polymerase activity that can copy either DNA or RNA templates, and a ribonuclease H (RNase H) activity that cleaves the RNA strand of RNA-DNA heteroduplexes during plus-strand synthesis and hydrolyzes RNA primers. The conversion leads to a linear dsDNA copy of the retrotransposon that includes long terminal repeats (LTRs) at both ends. Integrase (IN) targets the VLP to the nucleus, where a subparticle preintegration complex (PIC) containing at least integrase and the newly synthesized dsDNA copy of the retrotransposon must transit the nuclear membrane. Once in the nucleus, integrase performs the integration of the dsDNA into the host genome. The sequence is that of Transposon Ty2-DR2 Gag-Pol polyprotein (TY2B-DR2) from Saccharomyces cerevisiae (strain ATCC 204508 / S288c) (Baker's yeast).